Consider the following 91-residue polypeptide: Putative antitoxin YutD (91 aa).

Cys-77 and Cys-81 are joined by a disulfide.

As to quaternary structure, homodimer, probably forms a complex with cognate toxin YutE.

Probable antitoxin component of a putative type VII toxin-antitoxin (TA) system. Probably neutralizes cognate toxin YutE. This Bacillus subtilis (strain 168) protein is Putative antitoxin YutD (yutD).